Consider the following 164-residue polypeptide: Photosystem II extrinsic protein V (164 aa).

Positions 1-27 (MIPNRKIQLSLFAVIIVFETLLNQVYA) are cleaved as a signal peptide. The heme c site is built by Cys64, Cys67, His68, and Met131.

Belongs to the cytochrome c family. PsbV subfamily. As to quaternary structure, PSII is composed of 1 copy each of membrane proteins PsbA, PsbB, PsbC, PsbD, PsbE, PsbF, PsbH, PsbI, PsbJ, PsbK, PsbL, PsbM, PsbT, PsbY, PsbZ, Psb30/Ycf12, at least 3 peripheral proteins of the oxygen-evolving complex and a large number of cofactors. It forms dimeric complexes. The extrinsic subunits in red algae are PsbO (OEC33), PsbQ', cytochrome c-550 and PsbU. It depends on heme c as a cofactor.

It is found in the plastid. The protein localises to the chloroplast thylakoid membrane. One of the extrinsic, lumenal subunits of photosystem II (PSII). PSII is a light-driven water plastoquinone oxidoreductase, using light energy to abstract electrons from H(2)O, generating a proton gradient subsequently used for ATP formation. The extrinsic proteins stabilize the structure of photosystem II oxygen-evolving complex (OEC), the ion environment of oxygen evolution and protect the OEC against heat-induced inactivation. The polypeptide is Photosystem II extrinsic protein V (Gracilaria tenuistipitata var. liui (Red alga)).